The primary structure comprises 207 residues: Large ribosomal subunit protein bL25 (207 aa).

The protein belongs to the bacterial ribosomal protein bL25 family. CTC subfamily. In terms of assembly, part of the 50S ribosomal subunit; part of the 5S rRNA/L5/L18/L25 subcomplex. Contacts the 5S rRNA. Binds to the 5S rRNA independently of L5 and L18.

Functionally, this is one of the proteins that binds to the 5S RNA in the ribosome where it forms part of the central protuberance. In Rhizorhabdus wittichii (strain DSM 6014 / CCUG 31198 / JCM 15750 / NBRC 105917 / EY 4224 / RW1) (Sphingomonas wittichii), this protein is Large ribosomal subunit protein bL25.